Reading from the N-terminus, the 153-residue chain is Putative nuclear shuttle protein (153 aa).

The protein belongs to the nanoviridae nuclear shuttle protein family.

The protein localises to the host nucleus. It localises to the host cytoplasm. Functionally, putative nuclear shuttle protein. The polypeptide is Putative nuclear shuttle protein (DNA-N) (Cicer arietinum (Chickpea)).